The chain runs to 92 residues: Small ribosomal subunit protein uS19 (92 aa).

The protein belongs to the universal ribosomal protein uS19 family.

Protein S19 forms a complex with S13 that binds strongly to the 16S ribosomal RNA. This Enterococcus faecalis (strain ATCC 700802 / V583) protein is Small ribosomal subunit protein uS19.